We begin with the raw amino-acid sequence, 337 residues long: Alcohol dehydrogenase 1 (337 aa).

Zn(2+)-binding residues include cysteine 37, histidine 58, cysteine 89, cysteine 92, cysteine 95, cysteine 103, and cysteine 145.

The protein belongs to the zinc-containing alcohol dehydrogenase family. Multimeric (with different ratios of monomers). Requires Zn(2+) as cofactor.

It catalyses the reaction a primary alcohol + NAD(+) = an aldehyde + NADH + H(+). The catalysed reaction is a secondary alcohol + NAD(+) = a ketone + NADH + H(+). The protein operates within alcohol metabolism; ethanol biosynthesis via fermentation pathway. Inhibited by ethanol. In Zymomonas mobilis subsp. mobilis (strain ATCC 31821 / ZM4 / CP4), this protein is Alcohol dehydrogenase 1 (adhA).